The sequence spans 78 residues: Translation initiation factor IF-1 (78 aa).

One can recognise an S1-like domain in the interval Ser2 to Lys78.

It belongs to the IF-1 family. As to quaternary structure, component of the 30S ribosomal translation pre-initiation complex which assembles on the 30S ribosome in the order IF-2 and IF-3, IF-1 and N-formylmethionyl-tRNA(fMet); mRNA recruitment can occur at any time during PIC assembly.

It localises to the cytoplasm. Its function is as follows. One of the essential components for the initiation of protein synthesis. Stabilizes the binding of IF-2 and IF-3 on the 30S subunit to which N-formylmethionyl-tRNA(fMet) subsequently binds. Helps modulate mRNA selection, yielding the 30S pre-initiation complex (PIC). Upon addition of the 50S ribosomal subunit IF-1, IF-2 and IF-3 are released leaving the mature 70S translation initiation complex. This Onion yellows phytoplasma (strain OY-M) protein is Translation initiation factor IF-1.